A 336-amino-acid chain; its full sequence is MSEIQSLTAQALADVAAAHTPDQLETLRVALLGKNGSITAQLKQLGTLPADQRKAAGEAINLARDALTTALSERKQVLETAALDARLEGERIDVTLPGRRGERGGLHPVTRTLERIVEIFARLGYELSDGPEIEDDWHNFEALNFPPHHPARAMHDTFYFGDGRLLRTHTSGVQVRYMDTAVATKSGPPLRMIAAGKVYRSDSDQTHSPMFHQVEGLLVDEHSNFADLKGTLSEFVRAFFERDFEMRFRPSYFPFVEPGAEVDIAWQQPDGSTRWLEVLGCGMVHPNVLRSVGIDPERYTGFAFGLGVERFAMLRYGVNDLRAFFENDVRFLRQFA.

Glu257 lines the Mg(2+) pocket.

The protein belongs to the class-II aminoacyl-tRNA synthetase family. Phe-tRNA synthetase alpha subunit type 1 subfamily. Tetramer of two alpha and two beta subunits. It depends on Mg(2+) as a cofactor.

The protein resides in the cytoplasm. The catalysed reaction is tRNA(Phe) + L-phenylalanine + ATP = L-phenylalanyl-tRNA(Phe) + AMP + diphosphate + H(+). The polypeptide is Phenylalanine--tRNA ligase alpha subunit (Xanthomonas campestris pv. campestris (strain 8004)).